The following is a 347-amino-acid chain: 4-hydroxy-3-methylbut-2-en-1-yl diphosphate synthase (flavodoxin) (347 aa).

Residues C259, C262, C294, and E301 each coordinate [4Fe-4S] cluster.

Belongs to the IspG family. The cofactor is [4Fe-4S] cluster.

The enzyme catalyses (2E)-4-hydroxy-3-methylbut-2-enyl diphosphate + oxidized [flavodoxin] + H2O + 2 H(+) = 2-C-methyl-D-erythritol 2,4-cyclic diphosphate + reduced [flavodoxin]. Its pathway is isoprenoid biosynthesis; isopentenyl diphosphate biosynthesis via DXP pathway; isopentenyl diphosphate from 1-deoxy-D-xylulose 5-phosphate: step 5/6. Functionally, converts 2C-methyl-D-erythritol 2,4-cyclodiphosphate (ME-2,4cPP) into 1-hydroxy-2-methyl-2-(E)-butenyl 4-diphosphate. This is 4-hydroxy-3-methylbut-2-en-1-yl diphosphate synthase (flavodoxin) from Caldicellulosiruptor saccharolyticus (strain ATCC 43494 / DSM 8903 / Tp8T 6331).